The chain runs to 264 residues: MHNPDGSASPTADPGSELQTLGQAARRPPPPRAGHDAPRRTRPSARKPLSCFSRRPMPTREPPKTRGSRGHLHTHPPGPGPPLQGLAPRGLKTSAPRPPCQPQPGPHKAKTKKIVFEDELLSQALLGAKKPIGAIPKGHKPRPHPVPDYELKYPPVSSERERSRYVAVFQDQYGEFLELQHEVGCAQAKLRQLEALLSSLPPPQSQKEAQVAARVWREFEMKRMDPGFLDKQARCHYLKGKLRHLKTQIQKFDDQGDSEGSVYF.

Residues 1–10 are compositionally biased toward polar residues; it reads MHNPDGSASP. A disordered region spans residues 1 to 112; that stretch reads MHNPDGSASP…QPGPHKAKTK (112 aa). A compositionally biased stretch (pro residues) spans 96-105; sequence PRPPCQPQPG. In terms of domain architecture, OCEL spans 147-257; sequence PDYELKYPPV…QIQKFDDQGD (111 aa).

This sequence belongs to the ELL/occludin family.

This chain is Occludin/ELL domain-containing protein 1 (OCEL1), found in Homo sapiens (Human).